Reading from the N-terminus, the 316-residue chain is DNA-directed RNA polymerase III subunit RPC6 (316 aa).

The residue at position 2 (Ala-2) is an N-acetylalanine. Residues Lys-5 and Lys-7 each participate in a glycyl lysine isopeptide (Lys-Gly) (interchain with G-Cter in SUMO2) cross-link. [4Fe-4S] cluster-binding residues include Cys-287, Cys-290, Cys-296, and Cys-307.

The protein belongs to the eukaryotic RPC34/RPC39 RNA polymerase subunit family. In terms of assembly, component of the RNA polymerase III complex consisting of 17 subunits: a ten-subunit horseshoe-shaped catalytic core composed of POLR3A/RPC1, POLR3B/RPC2, POLR1C/RPAC1, POLR1D/RPAC2, POLR3K/RPC10, POLR2E/RPABC1, POLR2F/RPABC2, POLR2H/RPABC3, POLR2K/RPABC4 and POLR2L/RPABC5; a mobile stalk composed of two subunits POLR3H/RPC8 and CRCP/RPC9, protruding from the core and functioning primarily in transcription initiation; and additional subunits homologous to general transcription factors of the RNA polymerase II machinery, POLR3C/RPC3-POLR3F/RPC6-POLR3G/RPC7 heterotrimer required for transcription initiation and POLR3D/RPC4-POLR3E/RPC5 heterodimer involved in both transcription initiation and termination. Directly interacts with POLR3C. Interacts with TBP and TFIIIB90 and GTF3C4. Interacts with MAF1. As part of the RNA polymerase III complex, interacts with PKP2.

Its subcellular location is the nucleus. DNA-dependent RNA polymerase catalyzes the transcription of DNA into RNA using the four ribonucleoside triphosphates as substrates. Specific peripheric component of RNA polymerase III (Pol III) which synthesizes small non-coding RNAs including 5S rRNA, snRNAs, tRNAs and miRNAs from at least 500 distinct genomic loci. Part of POLR3C/RPC3-POLR3F/RPC6-POLR3G/RPC7 heterotrimer that coordinates the dynamics of Pol III stalk and clamp modules during the transition from apo to elongation state. Pol III plays a key role in sensing and limiting infection by intracellular bacteria and DNA viruses, including varicella zoster virus. Acts as a nuclear and cytosolic DNA sensor detecting AT-rich DNA, involved in innate immune response. Can sense non-self dsDNA that serves as template for transcription into dsRNA. The non-self RNA polymerase III transcripts, such as Epstein-Barr virus-encoded RNAs (EBERs) induce type I interferon and NF-kappa-B through the RIG-I pathway. Preferentially binds double-stranded DNA (dsDNA). The chain is DNA-directed RNA polymerase III subunit RPC6 from Homo sapiens (Human).